The following is a 745-amino-acid chain: MSQENTLNSGDETILAEAVAPAHAVFTLSVRPDNIGIITVDVVGDKVNTLKAKFAEQIAEILQQAQALSQLQGLVIISGKPDSFIAGADITMIAACHTAQDARILAQKGQSILAQIAAFPVPVVAAIHGACLGGGLELALACHSRICSQDDKTVLGLPEVQLGLLPGSGGTQRLPRLVGVSKALDMILTGRQVRARQALKMGLVDDVVPQDILLDVAIQRAKAGWLDKPALPWQERLLSGPLGKALLFNIVRKKTQAKTKGHYPAAERIIDVVRKGLDHGGPAGYEAEAKAFGELAMTPESAALRSLFFATTSLKKESGGKAQPRAIHRVGVLGGGLMGGGIANVTATRAGLPVRIKDINPTGINQALKYTWDTLGKRVRSKRMRPAERQRQMMLISGSTDYCGFGNVDIVVEAVFEDLSLKQQMVADIEHFAAPHTIFASNTSSLPISDIAAQAQRPEQVIGLHYFSPVDKMPLVEVIPHAKTSEETIATTVALARKQGKTAIVVADRAGFYVNRILAPYINEAARCLLDGEPIASVDKALVDFGFPVGPITLLDEVGIDVGTKIIPILVEKLGARFAAPPSFDVILKDGRKGRKNGRGFYLYPAKSSGFKWKRSPVKQVDTSVYTLLGVTPKAHLESAVIAQRCTMMMLNEAARCLDESIIRNPRDGDIGAVFGIGFPPFLGGPFRYMDSLGADKVVKTLNLLAQQYGERFEPCSLLVTMAGQQKRFYPPENSLDEAAITAHN.

Positions 47-209 (VNTLKAKFAE…KMGLVDDVVP (163 aa)) are enoyl-CoA hydratase. Residues 325–745 (RAIHRVGVLG…LDEAAITAHN (421 aa)) are 3-hydroxyacyl-CoA dehydrogenase.

In the N-terminal section; belongs to the enoyl-CoA hydratase/isomerase family. The protein in the central section; belongs to the 3-hydroxyacyl-CoA dehydrogenase family. Heterotetramer of two alpha chains (FadJ) and two beta chains (FadI).

The protein localises to the cytoplasm. It catalyses the reaction a (3S)-3-hydroxyacyl-CoA = a (2E)-enoyl-CoA + H2O. It carries out the reaction a 4-saturated-(3S)-3-hydroxyacyl-CoA = a (3E)-enoyl-CoA + H2O. The enzyme catalyses a (3S)-3-hydroxyacyl-CoA + NAD(+) = a 3-oxoacyl-CoA + NADH + H(+). The catalysed reaction is (3S)-3-hydroxybutanoyl-CoA = (3R)-3-hydroxybutanoyl-CoA. Its pathway is lipid metabolism; fatty acid beta-oxidation. Its function is as follows. Catalyzes the formation of a hydroxyacyl-CoA by addition of water on enoyl-CoA. Also exhibits 3-hydroxyacyl-CoA epimerase and 3-hydroxyacyl-CoA dehydrogenase activities. This is Fatty acid oxidation complex subunit alpha from Yersinia enterocolitica serotype O:8 / biotype 1B (strain NCTC 13174 / 8081).